A 149-amino-acid chain; its full sequence is 3-hydroxyacyl-[acyl-carrier-protein] dehydratase FabZ (149 aa).

Residue His52 is part of the active site.

The protein belongs to the thioester dehydratase family. FabZ subfamily.

The protein localises to the cytoplasm. It carries out the reaction a (3R)-hydroxyacyl-[ACP] = a (2E)-enoyl-[ACP] + H2O. Its function is as follows. Involved in unsaturated fatty acids biosynthesis. Catalyzes the dehydration of short chain beta-hydroxyacyl-ACPs and long chain saturated and unsaturated beta-hydroxyacyl-ACPs. The polypeptide is 3-hydroxyacyl-[acyl-carrier-protein] dehydratase FabZ (Cupriavidus necator (strain ATCC 17699 / DSM 428 / KCTC 22496 / NCIMB 10442 / H16 / Stanier 337) (Ralstonia eutropha)).